The sequence spans 382 residues: UDP-N-acetylglucosamine--N-acetylmuramyl-(pentapeptide) pyrophosphoryl-undecaprenol N-acetylglucosamine transferase (382 aa).

UDP-N-acetyl-alpha-D-glucosamine contacts are provided by residues 11-13, N124, R165, S200, I254, and Q299; that span reads TGG.

Belongs to the glycosyltransferase 28 family. MurG subfamily.

It is found in the cell inner membrane. It catalyses the reaction di-trans,octa-cis-undecaprenyl diphospho-N-acetyl-alpha-D-muramoyl-L-alanyl-D-glutamyl-meso-2,6-diaminopimeloyl-D-alanyl-D-alanine + UDP-N-acetyl-alpha-D-glucosamine = di-trans,octa-cis-undecaprenyl diphospho-[N-acetyl-alpha-D-glucosaminyl-(1-&gt;4)]-N-acetyl-alpha-D-muramoyl-L-alanyl-D-glutamyl-meso-2,6-diaminopimeloyl-D-alanyl-D-alanine + UDP + H(+). It participates in cell wall biogenesis; peptidoglycan biosynthesis. Cell wall formation. Catalyzes the transfer of a GlcNAc subunit on undecaprenyl-pyrophosphoryl-MurNAc-pentapeptide (lipid intermediate I) to form undecaprenyl-pyrophosphoryl-MurNAc-(pentapeptide)GlcNAc (lipid intermediate II). In Nitratidesulfovibrio vulgaris (strain DSM 19637 / Miyazaki F) (Desulfovibrio vulgaris), this protein is UDP-N-acetylglucosamine--N-acetylmuramyl-(pentapeptide) pyrophosphoryl-undecaprenol N-acetylglucosamine transferase.